Consider the following 672-residue polypeptide: Acetyl-coenzyme A synthetase (672 aa).

Residues 217–220 (RRGK) and T335 each bind CoA. Residues 411–413 (GEP), 435–440 (DTWWQT), D529, R544, and R555 each bind ATP. V566, H568, and I571 together coordinate Mg(2+). Residue R613 participates in CoA binding. N6-acetyllysine is present on K638.

This sequence belongs to the ATP-dependent AMP-binding enzyme family. It depends on Mg(2+) as a cofactor. In terms of processing, acetylated. Deacetylation by the SIR2-homolog deacetylase activates the enzyme. Post-translationally, the N-terminus is blocked.

The catalysed reaction is acetate + ATP + CoA = acetyl-CoA + AMP + diphosphate. Its function is as follows. Catalyzes the conversion of acetate into acetyl-CoA (AcCoA), an essential intermediate at the junction of anabolic and catabolic pathways. AcsA undergoes a two-step reaction. In the first half reaction, AcsA combines acetate with ATP to form acetyl-adenylate (AcAMP) intermediate. In the second half reaction, it can then transfer the acetyl group from AcAMP to the sulfhydryl group of CoA, forming the product AcCoA. In Methanothrix soehngenii (Methanosaeta concilii), this protein is Acetyl-coenzyme A synthetase.